Reading from the N-terminus, the 422-residue chain is O-mycaminosyltylonolide 6-deoxyallosyltransferase (422 aa).

Belongs to the glycosyltransferase 28 family.

The enzyme catalyses 5-O-beta-D-mycaminosyltylonolide + dTDP-6-deoxy-alpha-D-allose = demethyllactenocin + dTDP + H(+). In terms of biological role, involved in the biosynthesis of the macrolide antibiotic tylosin derived from the polyketide lactone tylactone. Catalyzes the transfer of 6-deoxy-alpha-D-allose from dTDP-6-deoxy-alpha-D-allose to O-mycaminosyltylonolide (OMT) to yield demethyllactenocin. The sequence is that of O-mycaminosyltylonolide 6-deoxyallosyltransferase from Streptomyces fradiae (Streptomyces roseoflavus).